We begin with the raw amino-acid sequence, 88 residues long: Small ribosomal subunit protein bS16 (88 aa).

It belongs to the bacterial ribosomal protein bS16 family.

The protein is Small ribosomal subunit protein bS16 of Geobacter sulfurreducens (strain ATCC 51573 / DSM 12127 / PCA).